An 81-amino-acid chain; its full sequence is Lantipeptide prochlorosin 1.1 (81 aa).

A propeptide spanning residues Met-1–Gly-65 is cleaved from the precursor. The segment at residues Cys-68–Thr-72 is a cross-link (beta-methyllanthionine (Cys-Thr)). The segment at residues Thr-77 to Cys-81 is a cross-link (beta-methyllanthionine (Thr-Cys)).

In terms of processing, cross-links are proved in vitro, when coepressed in E.coli with the ProcM lanthionine synthetase. Post-translationally, the beta-methyllanthionine residues have a DL configuration (with 2S,3S,6R stereochemistry). Maturation of prochlorosin involves the enzymatic conversion of Thr, and Ser into dehydrated AA and the formation of thioether bonds with cysteines. This is followed by membrane translocation and cleavage of the modified precursor.

It localises to the secreted. Functionally, lanthionine-containing peptide (lantipeptide) with unknown function. Does not show antibiotic activity against Lactococcus lactis 117 and Bacillus subtilis 6633 bacteria. Organisms that produce this peptide live in oligotrophic environments at very dilute concentrations, suggesting this peptide is not secreted to influence other bacteria. This is Lantipeptide prochlorosin 1.1 from Prochlorococcus marinus (strain MIT 9313).